A 229-amino-acid polypeptide reads, in one-letter code: Peptidase E (229 aa).

Active-site charge relay system residues include Ser-120, Asp-135, and His-157.

It belongs to the peptidase S51 family.

It localises to the cytoplasm. It carries out the reaction Dipeptidase E catalyzes the hydrolysis of dipeptides Asp-|-Xaa. It does not act on peptides with N-terminal Glu, Asn or Gln, nor does it cleave isoaspartyl peptides.. In terms of biological role, hydrolyzes dipeptides containing N-terminal aspartate residues. May play a role in allowing the cell to use peptide aspartate to spare carbon otherwise required for the synthesis of the aspartate family of amino acids. The protein is Peptidase E of Shigella flexneri serotype 5b (strain 8401).